The chain runs to 455 residues: Glutamyl-tRNA reductase (455 aa).

Substrate contacts are provided by residues 49 to 52 (TCNR), Ser109, 114 to 116 (ETQ), and Gln120. Residue Cys50 is the Nucleophile of the active site. 189-194 (GAGKMG) provides a ligand contact to NADP(+).

Belongs to the glutamyl-tRNA reductase family. Homodimer.

The enzyme catalyses (S)-4-amino-5-oxopentanoate + tRNA(Glu) + NADP(+) = L-glutamyl-tRNA(Glu) + NADPH + H(+). It participates in porphyrin-containing compound metabolism; protoporphyrin-IX biosynthesis; 5-aminolevulinate from L-glutamyl-tRNA(Glu): step 1/2. Its function is as follows. Catalyzes the NADPH-dependent reduction of glutamyl-tRNA(Glu) to glutamate 1-semialdehyde (GSA). This chain is Glutamyl-tRNA reductase, found in Bacillus subtilis (strain 168).